We begin with the raw amino-acid sequence, 214 residues long: Thymidylate kinase (214 aa).

9–16 (GVDGSGKS) is a binding site for ATP.

This sequence belongs to the thymidylate kinase family.

The enzyme catalyses dTMP + ATP = dTDP + ADP. Functionally, phosphorylation of dTMP to form dTDP in both de novo and salvage pathways of dTTP synthesis. The sequence is that of Thymidylate kinase from Symbiobacterium thermophilum (strain DSM 24528 / JCM 14929 / IAM 14863 / T).